The following is a 314-amino-acid chain: Protein ATP1B4 (314 aa).

A compositionally biased stretch (polar residues) spans 1-17 (MATTAGEQANYLQSADS). The disordered stretch occupies residues 1–37 (MATTAGEQANYLQSADSMSDGRQHHPEEAGEKKQEEQ). Over 1 to 69 (MATTAGEQAN…VLGRDKKSWA (69 aa)) the chain is Cytoplasmic. The segment covering 19–37 (SDGRQHHPEEAGEKKQEEQ) has biased composition (basic and acidic residues). The helical transmembrane segment at 70 to 90 (LILLFYFILYCFLAGLFALCI) threads the bilayer. The Extracellular portion of the chain corresponds to 91–314 (YGLLATISPY…GRVAFTLHIG (224 aa)). Cysteine 160 and cysteine 179 are joined by a disulfide. N-linked (GlcNAc...) asparagine glycosylation is present at asparagine 188. 2 disulfide bridges follow: cysteine 189–cysteine 205 and cysteine 228–cysteine 287. Asparagine 264 carries N-linked (GlcNAc...) asparagine glycosylation.

It belongs to the X(+)/potassium ATPases subunit beta family. In terms of assembly, composed of two subunits: alpha (catalytic) and beta (accessory). Post-translationally, glycosylated. In terms of tissue distribution, expressed in skeletal muscle, liver, lung, kidney, heart, brain and skin.

The protein localises to the membrane. This is the non-catalytic component of the active enzyme, which catalyzes the hydrolysis of ATP coupled with the exchange of Na(+) and K(+) ions across the plasma membrane. This is Protein ATP1B4 (atp1b4) from Xenopus laevis (African clawed frog).